Consider the following 146-residue polypeptide: 3-dehydroquinate dehydratase (146 aa).

Tyr24 functions as the Proton acceptor in the catalytic mechanism. 3 residues coordinate substrate: Asn73, His79, and Asp86. The Proton donor role is filled by His99. Substrate is bound by residues 100 to 101 (LS) and Arg110.

The protein belongs to the type-II 3-dehydroquinase family. In terms of assembly, homododecamer.

It carries out the reaction 3-dehydroquinate = 3-dehydroshikimate + H2O. Its pathway is metabolic intermediate biosynthesis; chorismate biosynthesis; chorismate from D-erythrose 4-phosphate and phosphoenolpyruvate: step 3/7. Catalyzes a trans-dehydration via an enolate intermediate. The chain is 3-dehydroquinate dehydratase from Shewanella baltica (strain OS195).